Consider the following 177-residue polypeptide: Probable DNA-directed RNA polymerase subunit delta (177 aa).

An HTH HARE-type domain is found at 14-81 (CSMIEVVHSV…GENRWGLRSW (68 aa)). The interval 93 to 177 (PQPKPKKKRK…ETEEEEEEEL (85 aa)) is disordered. Positions 106–177 (DGFDDYIEED…ETEEEEEEEL (72 aa)) are enriched in acidic residues.

Belongs to the RpoE family. RNAP is composed of a core of 2 alpha, a beta and a beta' subunits. The core is associated with a delta subunit and one of several sigma factors.

Participates in both the initiation and recycling phases of transcription. In the presence of the delta subunit, RNAP displays an increased specificity of transcription, a decreased affinity for nucleic acids, and an increased efficiency of RNA synthesis because of enhanced recycling. In Bacillus cereus (strain AH187), this protein is Probable DNA-directed RNA polymerase subunit delta.